We begin with the raw amino-acid sequence, 504 residues long: Anthocyanidin 3-O-glucoside 5-O-glucosyltransferase (504 aa).

Residue H23 is the Proton acceptor of the active site. H23 serves as a coordination point for an anthocyanidin. The interval 107–126 (TKKGQGQGQGQGQGQGQGQG) is disordered. Gly residues predominate over residues 111-125 (QGQGQGQGQGQGQGQ). UDP-alpha-D-glucose contacts are provided by T157, Q377, H392, W395, N396, S397, E400, D416, and Q417.

This sequence belongs to the UDP-glycosyltransferase family. As to expression, predominantly expressed in petals and weakly in filaments. Not expressed in leaves, stems and other floral organs.

The catalysed reaction is an anthocyanidin 3-O-beta-D-glucoside + UDP-alpha-D-glucose = an anthocyanidin 3,5-di-O-beta-D-glucoside + UDP + 2 H(+). Its pathway is pigment biosynthesis; anthocyanin biosynthesis. In terms of biological role, catalyzes the glucosylation at the O-5 position of anthocyanidin 3-glucosides to form anthocyanidin 3,5-di-O-glucosides using UDP-glucose as sugar donor. Anthocyanidin 3,5-di-O-glucosides are molecules that are responsible for pigmentation. Involved in biosynsthesis of accumulate gentiodelphin, a unique polyacylated delphinidin-type anthocyanin, in the petals. Also acts on anthocyanidin 3-O-(6-O-malonylglucoside). Much less active with hydroxycinnamoylglucose derivatives. No activity in the absence of the 3-O-glucoside group. In Gentiana triflora (Clustered gentian), this protein is Anthocyanidin 3-O-glucoside 5-O-glucosyltransferase (5GT7).